The following is a 351-amino-acid chain: Uroporphyrinogen decarboxylase (351 aa).

Residues 25 to 29, Asp-74, Tyr-151, Ser-206, and His-325 each bind substrate; that span reads RQAGR.

It belongs to the uroporphyrinogen decarboxylase family. In terms of assembly, homodimer.

The protein resides in the cytoplasm. The catalysed reaction is uroporphyrinogen III + 4 H(+) = coproporphyrinogen III + 4 CO2. It functions in the pathway porphyrin-containing compound metabolism; protoporphyrin-IX biosynthesis; coproporphyrinogen-III from 5-aminolevulinate: step 4/4. In terms of biological role, catalyzes the decarboxylation of four acetate groups of uroporphyrinogen-III to yield coproporphyrinogen-III. This is Uroporphyrinogen decarboxylase from Chlorobium luteolum (strain DSM 273 / BCRC 81028 / 2530) (Pelodictyon luteolum).